Reading from the N-terminus, the 481-residue chain is Cysteine--tRNA ligase (481 aa).

Residue cysteine 29 coordinates Zn(2+). The short motif at 31 to 41 (PTTYDYIHLGN) is the 'HIGH' region element. 3 residues coordinate Zn(2+): cysteine 209, histidine 234, and glutamate 238. A 'KMSKS' region motif is present at residues 267-271 (KMSKS). Residue lysine 270 coordinates ATP.

This sequence belongs to the class-I aminoacyl-tRNA synthetase family. As to quaternary structure, monomer. Zn(2+) serves as cofactor.

The protein localises to the cytoplasm. The catalysed reaction is tRNA(Cys) + L-cysteine + ATP = L-cysteinyl-tRNA(Cys) + AMP + diphosphate. This Heliobacterium modesticaldum (strain ATCC 51547 / Ice1) protein is Cysteine--tRNA ligase.